Here is a 77-residue protein sequence, read N- to C-terminus: Large ribosomal subunit protein bL28 (77 aa).

The segment at 1-21 (MARVCKVTGKRPMTGNNVSHA) is disordered.

Belongs to the bacterial ribosomal protein bL28 family.

The polypeptide is Large ribosomal subunit protein bL28 (Chromobacterium violaceum (strain ATCC 12472 / DSM 30191 / JCM 1249 / CCUG 213 / NBRC 12614 / NCIMB 9131 / NCTC 9757 / MK)).